A 188-amino-acid polypeptide reads, in one-letter code: Elongation factor P (188 aa).

The protein belongs to the elongation factor P family.

It localises to the cytoplasm. Its pathway is protein biosynthesis; polypeptide chain elongation. Involved in peptide bond synthesis. Stimulates efficient translation and peptide-bond synthesis on native or reconstituted 70S ribosomes in vitro. Probably functions indirectly by altering the affinity of the ribosome for aminoacyl-tRNA, thus increasing their reactivity as acceptors for peptidyl transferase. This chain is Elongation factor P, found in Saccharopolyspora erythraea (strain ATCC 11635 / DSM 40517 / JCM 4748 / NBRC 13426 / NCIMB 8594 / NRRL 2338).